Reading from the N-terminus, the 235-residue chain is uncharacterized protein (235 aa).

Residues 82–221 (LAFKKFPPDP…DTGELIRESP (140 aa)) form the N-acetyltransferase domain.

This sequence belongs to the acetyltransferase family.

Its subcellular location is the golgi apparatus membrane. It is found in the endoplasmic reticulum membrane. This is an uncharacterized protein from Schizosaccharomyces pombe (strain 972 / ATCC 24843) (Fission yeast).